Consider the following 239-residue polypeptide: 7-cyano-7-deazaguanine synthase (239 aa).

Residue 8–18 participates in ATP binding; sequence FSGGLDSTASL. C194, C209, C212, and C215 together coordinate Zn(2+).

Belongs to the QueC family.

It carries out the reaction 7-carboxy-7-deazaguanine + NH4(+) + ATP = 7-cyano-7-deazaguanine + ADP + phosphate + H2O + H(+). Its pathway is purine metabolism; 7-cyano-7-deazaguanine biosynthesis. Catalyzes the ATP-dependent conversion of 7-carboxy-7-deazaguanine (CDG) to 7-cyano-7-deazaguanine (preQ(0)). The polypeptide is 7-cyano-7-deazaguanine synthase (Pyrococcus abyssi (strain GE5 / Orsay)).